The following is a 176-amino-acid chain: MDQQQQGDKNLTVFVGPWGGNGGTTWDDGIYDGVREIRLVYDHCIDSISVIYDKNGKPAKSEKHGGVGGNKTSEIKLQYPEEYLTGVSGYYCPMVNSGTPVIRSMTFKSNKQVYGPYGVEQGTPFTFSVNGGRIVGMNGRSGWYLDSIGFHLSRPKSTKMINKLRKKIHWLTRIVA.

Residues 12–154 (TVFVGPWGGN…LDSIGFHLSR (143 aa)) enclose the Jacalin-type lectin domain.

It belongs to the jacalin lectin family.

This chain is Jacalin-related lectin 19 (JAL19), found in Arabidopsis thaliana (Mouse-ear cress).